The chain runs to 763 residues: Phosphoglycerol transferase I (763 aa).

Transmembrane regions (helical) follow at residues 1–21 (MSEL…AWKA), 26–46 (WWFA…ITLY), 77–97 (ILPG…LGWV), and 108–128 (VGYS…SPAF).

The protein belongs to the OpgB family.

It is found in the cell inner membrane. It carries out the reaction a phosphatidylglycerol + a membrane-derived-oligosaccharide D-glucose = a 1,2-diacyl-sn-glycerol + a membrane-derived-oligosaccharide 6-(glycerophospho)-D-glucose.. Its pathway is glycan metabolism; osmoregulated periplasmic glucan (OPG) biosynthesis. Functionally, transfers a phosphoglycerol residue from phosphatidylglycerol to the membrane-bound nascent glucan backbones. The polypeptide is Phosphoglycerol transferase I (Salmonella dublin (strain CT_02021853)).